A 132-amino-acid polypeptide reads, in one-letter code: uncharacterized protein (132 aa).

The protein to M.jannaschii MJ0661.

This is an uncharacterized protein from Helicobacter pylori (strain ATCC 700392 / 26695) (Campylobacter pylori).